A 345-amino-acid chain; its full sequence is DLICTGITSSNSPHVVKTATQGEVNVTGVIPLTTTPTKSHFANLKGTKTRGKLCPNCLNCTDLDVALGRPKCMGTIPSAKASILHEVKPVTSGCFPIMHDRTKIRQLPNLLRGYENIRLSTRNVINAEWAPGGPYKIGTSGSCPNVTNGNGFFATMAWAVPKDNKTATDPLTVEVPYICTKGEDQITVWGFHSDNEAQMVKLYGDSKPQKFTSSANGVTTHYVSQIGGFPNQTEDGGIPQSGRIVVDYMVQKPGKTGTIVYQRGVLLPQKVWCASGRSKVIKGSLPLIGEADCLHEKYGGLNKSKPYYTGEHAKAIGNCPIWVKTPLKLANGTKYRPPAKLLKER.

N-linked (GlcNAc...) asparagine; by host glycans are attached at residues Asn-25, Asn-59, Asn-145, Asn-164, Asn-231, Asn-302, and Asn-331.

This sequence belongs to the influenza viruses hemagglutinin family. Homotrimer of disulfide-linked HA1-HA2. In terms of processing, in natural infection, inactive HA is matured into HA1 and HA2 outside the cell by one or more trypsin-like, arginine-specific endoprotease secreted by the bronchial epithelial cells. One identified protease that may be involved in this process is secreted in lungs by club cells. Palmitoylated.

The protein localises to the virion membrane. The protein resides in the host apical cell membrane. Functionally, binds to sialic acid-containing receptors on the cell surface, bringing about the attachment of the virus particle to the cell. Plays a major role in the determination of host range restriction and virulence. Class I viral fusion protein. Responsible for penetration of the virus into the cell cytoplasm by mediating the fusion of the membrane of the endocytosed virus particle with the endosomal membrane. Low pH in endosomes induce an irreversible conformational change in HA2, releasing the fusion hydrophobic peptide. Several trimers are required to form a competent fusion pore. The sequence is that of Hemagglutinin (HA) from Homo sapiens (Human).